Here is a 199-residue protein sequence, read N- to C-terminus: Thymidylate kinase (199 aa).

7–14 (GTEGVGKT) is an ATP binding site.

This sequence belongs to the thymidylate kinase family.

The catalysed reaction is dTMP + ATP = dTDP + ADP. Functionally, phosphorylation of dTMP to form dTDP in both de novo and salvage pathways of dTTP synthesis. The protein is Thymidylate kinase of Acinetobacter baumannii (strain ACICU).